The following is a 102-amino-acid chain: Large ribosomal subunit protein bL21 (102 aa).

It belongs to the bacterial ribosomal protein bL21 family. As to quaternary structure, part of the 50S ribosomal subunit. Contacts protein L20.

Its function is as follows. This protein binds to 23S rRNA in the presence of protein L20. The sequence is that of Large ribosomal subunit protein bL21 from Exiguobacterium sp. (strain ATCC BAA-1283 / AT1b).